A 451-amino-acid polypeptide reads, in one-letter code: Tubulin alpha-1 chain (451 aa).

Gln11 is a GTP binding site. Residue Lys40 is modified to N6-acetyllysine. 6 residues coordinate GTP: Glu71, Gly144, Thr145, Thr179, Asn206, and Asn228. Mg(2+) is bound at residue Glu71. Residue Glu254 is part of the active site.

Belongs to the tubulin family. As to quaternary structure, dimer of alpha and beta chains. A typical microtubule is a hollow water-filled tube with an outer diameter of 25 nm and an inner diameter of 15 nM. Alpha-beta heterodimers associate head-to-tail to form protofilaments running lengthwise along the microtubule wall with the beta-tubulin subunit facing the microtubule plus end conferring a structural polarity. Microtubules usually have 13 protofilaments but different protofilament numbers can be found in some organisms and specialized cells. Mg(2+) is required as a cofactor. In terms of processing, undergoes a tyrosination/detyrosination cycle, the cyclic removal and re-addition of a C-terminal tyrosine residue by the enzymes tubulin tyrosine carboxypeptidase (TTCP) and tubulin tyrosine ligase (TTL), respectively. Acetylation of alpha chains at Lys-40 stabilizes microtubules and affects affinity and processivity of microtubule motors. This modification has a role in multiple cellular functions, ranging from cell motility, cell cycle progression or cell differentiation to intracellular trafficking and signaling.

Its subcellular location is the cytoplasm. The protein resides in the cytoskeleton. The enzyme catalyses GTP + H2O = GDP + phosphate + H(+). In terms of biological role, tubulin is the major constituent of microtubules, a cylinder consisting of laterally associated linear protofilaments composed of alpha- and beta-tubulin heterodimers. Microtubules grow by the addition of GTP-tubulin dimers to the microtubule end, where a stabilizing cap forms. Below the cap, tubulin dimers are in GDP-bound state, owing to GTPase activity of alpha-tubulin. This is Tubulin alpha-1 chain (TUBA1) from Zea mays (Maize).